The chain runs to 345 residues: Heat stress transcription factor A-4c (345 aa).

A DNA-binding region spans residues 11–105; that stretch reads LPPFLTKTYE…LMKNIHRRKP (95 aa). The tract at residues 119-185 is hydrophobic repeat HR-A/B; that stretch reads PLTESERRSM…SIVAYVSQVL (67 aa). The Nuclear localization signal signature appears at 199-203; sequence RRKRR. Residues 226 to 235 carry the AHA1 motif; the sequence is LTFWENLVSE. Residues 240-329 form a disordered region; sequence SGLQSSSMDH…NGNKIGNQRT (90 aa). Low complexity predominate over residues 274-283; the sequence is PPVTVTAPAP. The AHA2 signature appears at 289-298; that stretch reads DDFWEQCLTE. 2 stretches are compositionally biased toward polar residues: residues 296–308 and 317–329; these read LTENPGSTEQQEV and NDNNGNKIGNQRT.

The protein belongs to the HSF family. Class A subfamily. As to quaternary structure, homotrimer. In terms of processing, exhibits temperature-dependent phosphorylation. In terms of tissue distribution, expressed in roots, seedlings and at lower levels in leaves.

The protein localises to the nucleus. In terms of biological role, transcriptional activator that specifically binds DNA sequence 5'-AGAAnnTTCT-3' known as heat shock promoter elements (HSE). May be involved in general response to auxin. This is Heat stress transcription factor A-4c (HSFA4C) from Arabidopsis thaliana (Mouse-ear cress).